Consider the following 239-residue polypeptide: Small ribosomal subunit protein uS3c (239 aa).

In terms of domain architecture, KH type-2 spans 43–139 (IKNYIQKNRK…RFNISIEKVK (97 aa)). A disordered region spans residues 50–74 (NRKKGSNRKIESDSSSEVITHNRKM).

This sequence belongs to the universal ribosomal protein uS3 family. In terms of assembly, part of the 30S ribosomal subunit.

Its subcellular location is the plastid. The protein localises to the chloroplast. The chain is Small ribosomal subunit protein uS3c (rps3) from Hordeum vulgare (Barley).